The following is a 375-amino-acid chain: 23S rRNA (uracil(747)-C(5))-methyltransferase RlmC (375 aa).

[4Fe-4S] cluster-binding residues include Cys3, Cys11, Cys14, and Cys87. 4 residues coordinate S-adenosyl-L-methionine: Gln212, Phe241, Glu262, and Asn307. The active-site Nucleophile is the Cys334.

Belongs to the class I-like SAM-binding methyltransferase superfamily. RNA M5U methyltransferase family. RlmC subfamily.

The enzyme catalyses uridine(747) in 23S rRNA + S-adenosyl-L-methionine = 5-methyluridine(747) in 23S rRNA + S-adenosyl-L-homocysteine + H(+). Catalyzes the formation of 5-methyl-uridine at position 747 (m5U747) in 23S rRNA. This Escherichia coli O6:H1 (strain CFT073 / ATCC 700928 / UPEC) protein is 23S rRNA (uracil(747)-C(5))-methyltransferase RlmC.